The following is a 271-amino-acid chain: Protein PXR1 (271 aa).

The 48-residue stretch at Thr25–Lys72 folds into the G-patch domain. The tract at residues Ser147–Asn239 is disordered. The segment covering Asp157–Glu168 has biased composition (acidic residues). Over residues Lys175 to Glu203 the composition is skewed to basic residues. A compositionally biased stretch (basic and acidic residues) spans Glu204–Lys221. At Ser230 the chain carries Phosphoserine.

This sequence belongs to the PINX1 family. In terms of assembly, interacts with EST2.

The protein resides in the nucleus. Its subcellular location is the nucleolus. Functionally, involved in rRNA-processing at A0, A1 and A2 sites through its action in U18 and U24 snoRNA 3'-end final trimming. Negative regulator of telomerase through competition for binding to EST2 with TLC1. The chain is Protein PXR1 (PXR1) from Saccharomyces cerevisiae (strain ATCC 204508 / S288c) (Baker's yeast).